The chain runs to 399 residues: Salivary protein Tsal1 (399 aa).

The first 22 residues, M1–A22, serve as a signal peptide directing secretion. Residue N268 is glycosylated (N-linked (GlcNAc...) asparagine).

The protein belongs to the DNA/RNA non-specific endonuclease family. The cofactor is a divalent metal cation. Saliva (at protein level).

The protein localises to the secreted. In terms of biological role, binds double-stranded DNA (dsDNA) with high affinity. Binds double-stranded RNA. Binds single-stranded DNA with lower affinity and with a preference for purine-rich sequences. Shows residual nuclease activity for dsDNA. May facilitate blood meal intake by lowering the local viscosity created by the release of host DNA. In Glossina morsitans morsitans (Savannah tsetse fly), this protein is Salivary protein Tsal1.